An 846-amino-acid polypeptide reads, in one-letter code: Translation initiation factor IF-2 (846 aa).

Residues 198–219 (YKREEEEKKSKAKKAGGKGFKK) form a disordered region. The span at 207 to 219 (SKAKKAGGKGFKK) shows a compositional bias: basic residues. Residues 345–512 (SRAPVVTIMG…AVLLQSEVLE (168 aa)) form the tr-type G domain. A G1 region spans residues 354–361 (GHVDHGKT). 354–361 (GHVDHGKT) serves as a coordination point for GTP. The tract at residues 379-383 (GITQH) is G2. A G3 region spans residues 400–403 (DTPG). GTP is bound by residues 400-404 (DTPGH) and 454-457 (NKID). A G4 region spans residues 454–457 (NKID). Positions 490-492 (SAK) are G5.

It belongs to the TRAFAC class translation factor GTPase superfamily. Classic translation factor GTPase family. IF-2 subfamily.

It is found in the cytoplasm. Its function is as follows. One of the essential components for the initiation of protein synthesis. Protects formylmethionyl-tRNA from spontaneous hydrolysis and promotes its binding to the 30S ribosomal subunits. Also involved in the hydrolysis of GTP during the formation of the 70S ribosomal complex. In Francisella tularensis subsp. holarctica (strain OSU18), this protein is Translation initiation factor IF-2.